Consider the following 828-residue polypeptide: Isethionate sulfite-lyase (828 aa).

Positions 30-698 constitute a PFL domain; the sequence is ERVFTILESF…VVSATPNGRK (669 aa). Residues Arg-187, Gln-191, 466–468, and Arg-676 contribute to the 2-hydroxyethane-1-sulfonate site; that span reads CTE. The active-site Cysteine radical intermediate is Cys-466. Glu-468 acts as the Proton acceptor in catalysis. Residues 705–828 enclose the Glycine radical domain; the sequence is DGSSASHGAD…LIARTGHDVM (124 aa). Glycine radical is present on Gly-803.

The protein belongs to the glycyl radical enzyme (GRE) family. Homodimer. In terms of processing, requires the activating protein IseH to generate the key active site glycyl radical on Gly-803 that is involved in catalysis.

It carries out the reaction 2-hydroxyethane-1-sulfonate = acetaldehyde + sulfite + H(+). Its pathway is organosulfur degradation; alkanesulfonate degradation. In terms of biological role, involved in an anaerobic respiration pathway that converts the sulfonate isethionate (2-hydroxyethanesulfonate) to ammonia, acetate and sulfide. Catalyzes the radical-mediated C-S bond cleavage of isethionate (2-hydroxyethanesulfonate) to form sulfite and acetaldehyde. Shows no activity with taurine or ethanolamine as substrates. In Nitratidesulfovibrio vulgaris (strain ATCC 29579 / DSM 644 / CCUG 34227 / NCIMB 8303 / VKM B-1760 / Hildenborough) (Desulfovibrio vulgaris), this protein is Isethionate sulfite-lyase.